The chain runs to 146 residues: Leghemoglobin 1 (146 aa).

The region spanning 2–146 (GFTAQQDALV…LAAAIKKAMS (145 aa)) is the Globin domain. Ser-13 and Ser-14 each carry phosphoserine; by CCAMK. Position 30 is a nitrated tyrosine (Tyr-30). Residues Ser-45 and Ser-55 each carry the phosphoserine; by CCAMK modification. Ser-45 contacts heme b. His-61 lines the O2 pocket. 3 residues coordinate heme b: Lys-64, His-93, and Lys-96. Ser-123 is subject to Phosphoserine; by CCAMK. At Tyr-134 the chain carries Nitrated tyrosine.

This sequence belongs to the plant globin family. In terms of assembly, monomer. Nitrated in effective nodules and particularly in hypoxic conditions; this mechanism may play a protective role in the symbiosis by buffering toxic peroxynitrite NO(2)(-). Nitration level decrease during nodule senescence. In terms of processing, phosphorylated by CCAMK at serine residues in a Ca(2+)-dependent manner; the phosphorylation at Ser-45 disrupts the molecular environment of its porphyrin ring oxygen binding pocket, thus leading to a reduced oxygen consumption and to the delivery of oxygen O(2) to symbiosomes. Specifically and strongly expressed in root nodules and at low levels in seedlings.

It localises to the cytoplasm. The protein localises to the cytosol. It is found in the nucleus. Its function is as follows. Leghemoglobin that reversibly binds oxygen O(2) through a pentacoordinated heme iron. In root nodules, facilitates the diffusion of oxygen to the bacteroids while preventing the bacterial nitrogenase from being inactivated by buffering dioxygen, nitric oxide and carbon monoxide, and promoting the formation of reactive oxygen species (ROS, e.g. H(2)O(2)). This role is essential for symbiotic nitrogen fixation (SNF). This Lotus japonicus (Lotus corniculatus var. japonicus) protein is Leghemoglobin 1.